Here is a 22-residue protein sequence, read N- to C-terminus: Heliocin (22 aa).

Pyrrolidone carboxylic acid is present on glutamine 1. Residues 1–22 (QRFIHPTYRPPPQPRRPVIMRA) are disordered. Threonine 7 is a glycosylation site (O-linked (GalNAc...) threonine).

As to quaternary structure, monomer. Hemolymph.

It is found in the secreted. In terms of biological role, has antibacterial activity, preferentially against Gram-negative bacteria. This Heliothis virescens (Tobacco budworm moth) protein is Heliocin.